The following is a 180-amino-acid chain: O-acetyl-ADP-ribose deacetylase (180 aa).

One can recognise a Macro domain in the interval 1–175 (MKPQIDVIHG…LYQRLLTQRG (175 aa)). Residues 11 to 12 (DI), Asn-25, 33 to 35 (GVD), and 122 to 126 (STGVY) each bind substrate. Asp-35 (proton acceptor) is an active-site residue.

The protein belongs to the MacroD-type family. YmdB subfamily. In terms of assembly, homodimer. Interacts with RNase III.

It catalyses the reaction 3''-O-acetyl-ADP-D-ribose + H2O = ADP-D-ribose + acetate + H(+). The enzyme catalyses 2''-O-acetyl-ADP-D-ribose + H2O = ADP-D-ribose + acetate + H(+). Deacetylates O-acetyl-ADP ribose to yield ADP-ribose and free acetate. Down-regulates ribonuclease 3 (RNase III) activity. Acts by interacting directly with the region of the ribonuclease that is required for dimerization/activation. This is O-acetyl-ADP-ribose deacetylase from Enterobacter cloacae subsp. cloacae (strain ATCC 13047 / DSM 30054 / NBRC 13535 / NCTC 10005 / WDCM 00083 / NCDC 279-56).